We begin with the raw amino-acid sequence, 368 residues long: WAT1-related protein At5g40240 (368 aa).

10 helical membrane passes run 18-38 (VVPF…NTLF), 50-70 (VFVF…SVIF), 82-102 (PLFF…IAGC), 111-131 (TLAS…AVIF), 142-162 (ATQA…VVVL), 194-214 (WIIG…WYIL), 226-246 (ITVV…VCLF), 260-280 (ISLA…ALTH), 292-312 (ISLF…IFLG), and 315-335 (LHLG…TVIW). 2 consecutive EamA domains span residues 33 to 161 (GSNT…LVVV) and 208 to 334 (ISVW…YTVI).

This sequence belongs to the drug/metabolite transporter (DMT) superfamily. Plant drug/metabolite exporter (P-DME) (TC 2.A.7.4) family.

The protein resides in the membrane. The sequence is that of WAT1-related protein At5g40240 from Arabidopsis thaliana (Mouse-ear cress).